A 481-amino-acid polypeptide reads, in one-letter code: Proline--tRNA ligase (481 aa).

The protein belongs to the class-II aminoacyl-tRNA synthetase family. ProS type 3 subfamily. As to quaternary structure, homodimer.

It localises to the cytoplasm. The catalysed reaction is tRNA(Pro) + L-proline + ATP = L-prolyl-tRNA(Pro) + AMP + diphosphate. Catalyzes the attachment of proline to tRNA(Pro) in a two-step reaction: proline is first activated by ATP to form Pro-AMP and then transferred to the acceptor end of tRNA(Pro). The protein is Proline--tRNA ligase of Chlorobium luteolum (strain DSM 273 / BCRC 81028 / 2530) (Pelodictyon luteolum).